The primary structure comprises 349 residues: Ion-translocating oxidoreductase complex subunit D (349 aa).

3 helical membrane-spanning segments follow: residues V20 to G42, S77 to V99, and A124 to A144. T185 carries the FMN phosphoryl threonine modification. 5 helical membrane passes run S212 to L232, W239 to L259, A265 to T285, A291 to I311, and G315 to I335.

It belongs to the NqrB/RnfD family. The complex is composed of six subunits: RnfA, RnfB, RnfC, RnfD, RnfE and RnfG. Requires FMN as cofactor.

The protein localises to the cell inner membrane. In terms of biological role, part of a membrane-bound complex that couples electron transfer with translocation of ions across the membrane. In Shewanella baltica (strain OS195), this protein is Ion-translocating oxidoreductase complex subunit D.